A 115-amino-acid polypeptide reads, in one-letter code: Large ribosomal subunit protein uL24 (115 aa).

Belongs to the universal ribosomal protein uL24 family. In terms of assembly, part of the 50S ribosomal subunit.

Functionally, one of two assembly initiator proteins, it binds directly to the 5'-end of the 23S rRNA, where it nucleates assembly of the 50S subunit. In terms of biological role, one of the proteins that surrounds the polypeptide exit tunnel on the outside of the subunit. The protein is Large ribosomal subunit protein uL24 of Deinococcus geothermalis (strain DSM 11300 / CIP 105573 / AG-3a).